We begin with the raw amino-acid sequence, 299 residues long: Cycloserine biosynthesis protein DcsG (299 aa).

The ATP site is built by lysine 92, lysine 137, serine 144, glutamine 175, proline 176, and valine 178. Residues 95–298 (LADLAAHGVP…FAQALAERLK (204 aa)) enclose the ATP-grasp domain. Residues arginine 220 and arginine 254 contribute to the active site. Mg(2+) is bound by residues glutamate 269 and glutamate 271. Glutamate 271 is an active-site residue.

As to quaternary structure, monomer. Mg(2+) is required as a cofactor.

The catalysed reaction is O-ureido-D-serine + ATP + H2O + H(+) = D-cycloserine + NH4(+) + ADP + phosphate + CO2. In terms of biological role, involved in the biosynthesis of the antibiotic D-cycloserine (DCS), a cyclic structural analog of D-alanine, used as an antitubercular agent. Catalyzes the synthesis of D-cycloserine from O-ureido-D-serine (D-OUS). It reacts with D-OUS, D-homocysteine and beta-aminooxy-D-alanine. This Streptomyces lavendulae protein is Cycloserine biosynthesis protein DcsG.